Reading from the N-terminus, the 393-residue chain is S-adenosylmethionine synthase 1 (393 aa).

A Mg(2+)-binding site is contributed by E9. H15 is a binding site for ATP. E43 is a binding site for K(+). The L-methionine site is built by E56 and Q99. Residues 167-169 (DGK), 235-238 (SGRF), D246, 252-253 (RK), A269, K273, and K277 contribute to the ATP site. D246 contacts L-methionine. Position 277 (K277) interacts with L-methionine.

This sequence belongs to the AdoMet synthase family. As to quaternary structure, homotetramer. It depends on Mn(2+) as a cofactor. Mg(2+) is required as a cofactor. The cofactor is Co(2+). Requires K(+) as cofactor.

The protein localises to the cytoplasm. It carries out the reaction L-methionine + ATP + H2O = S-adenosyl-L-methionine + phosphate + diphosphate. It functions in the pathway amino-acid biosynthesis; S-adenosyl-L-methionine biosynthesis; S-adenosyl-L-methionine from L-methionine: step 1/1. Functionally, catalyzes the formation of S-adenosylmethionine from methionine and ATP. The reaction comprises two steps that are both catalyzed by the same enzyme: formation of S-adenosylmethionine (AdoMet) and triphosphate, and subsequent hydrolysis of the triphosphate. The protein is S-adenosylmethionine synthase 1 (SAMS1) of Brassica juncea (Indian mustard).